The following is a 540-amino-acid chain: Phenylalanine--tRNA ligase beta subunit (540 aa).

Residues 270 to 347 enclose the B5 domain; that stretch reads MTPRTLNVPR…IGYGFDKIKS (78 aa). The Mg(2+) site is built by Asp325, Asp331, Glu334, and Asp335.

The protein belongs to the phenylalanyl-tRNA synthetase beta subunit family. Type 2 subfamily. As to quaternary structure, tetramer of two alpha and two beta subunits. Mg(2+) is required as a cofactor.

It localises to the cytoplasm. The catalysed reaction is tRNA(Phe) + L-phenylalanine + ATP = L-phenylalanyl-tRNA(Phe) + AMP + diphosphate + H(+). This is Phenylalanine--tRNA ligase beta subunit from Methanococcoides burtonii (strain DSM 6242 / NBRC 107633 / OCM 468 / ACE-M).